The chain runs to 345 residues: Biotin synthase (345 aa).

In terms of domain architecture, Radical SAM core spans 38-256 (RQVQVSTLLS…IAVARIMMPS (219 aa)). [4Fe-4S] cluster-binding residues include Cys53, Cys57, and Cys60. [2Fe-2S] cluster is bound by residues Cys97, Cys128, Cys188, and Arg260.

Belongs to the radical SAM superfamily. Biotin synthase family. In terms of assembly, homodimer. Requires [4Fe-4S] cluster as cofactor. It depends on [2Fe-2S] cluster as a cofactor.

It carries out the reaction (4R,5S)-dethiobiotin + (sulfur carrier)-SH + 2 reduced [2Fe-2S]-[ferredoxin] + 2 S-adenosyl-L-methionine = (sulfur carrier)-H + biotin + 2 5'-deoxyadenosine + 2 L-methionine + 2 oxidized [2Fe-2S]-[ferredoxin]. It functions in the pathway cofactor biosynthesis; biotin biosynthesis; biotin from 7,8-diaminononanoate: step 2/2. In terms of biological role, catalyzes the conversion of dethiobiotin (DTB) to biotin by the insertion of a sulfur atom into dethiobiotin via a radical-based mechanism. The protein is Biotin synthase of Yersinia pestis bv. Antiqua (strain Antiqua).